The chain runs to 127 residues: ATP synthase epsilon chain (127 aa).

The protein belongs to the ATPase epsilon chain family. As to quaternary structure, F-type ATPases have 2 components, CF(1) - the catalytic core - and CF(0) - the membrane proton channel. CF(1) has five subunits: alpha(3), beta(3), gamma(1), delta(1), epsilon(1). CF(0) has three main subunits: a, b and c.

Its subcellular location is the cell inner membrane. Produces ATP from ADP in the presence of a proton gradient across the membrane. This chain is ATP synthase epsilon chain, found in Leptospira borgpetersenii serovar Hardjo-bovis (strain JB197).